Consider the following 60-residue polypeptide: Large ribosomal subunit protein bL32 (60 aa).

Positions 1 to 19 are enriched in basic residues; it reads MAVPKRRTSKRRKRARNTH. The interval 1-20 is disordered; that stretch reads MAVPKRRTSKRRKRARNTHK.

This sequence belongs to the bacterial ribosomal protein bL32 family.

The polypeptide is Large ribosomal subunit protein bL32 (Gemmatimonas aurantiaca (strain DSM 14586 / JCM 11422 / NBRC 100505 / T-27)).